The chain runs to 359 residues: Anhydro-N-acetylmuramic acid kinase (359 aa).

12–19 (GTSLDGVD) lines the ATP pocket.

It belongs to the anhydro-N-acetylmuramic acid kinase family.

The catalysed reaction is 1,6-anhydro-N-acetyl-beta-muramate + ATP + H2O = N-acetyl-D-muramate 6-phosphate + ADP + H(+). It functions in the pathway amino-sugar metabolism; 1,6-anhydro-N-acetylmuramate degradation. It participates in cell wall biogenesis; peptidoglycan recycling. In terms of biological role, catalyzes the specific phosphorylation of 1,6-anhydro-N-acetylmuramic acid (anhMurNAc) with the simultaneous cleavage of the 1,6-anhydro ring, generating MurNAc-6-P. Is required for the utilization of anhMurNAc either imported from the medium or derived from its own cell wall murein, and thus plays a role in cell wall recycling. The chain is Anhydro-N-acetylmuramic acid kinase from Sulfurovum sp. (strain NBC37-1).